The chain runs to 69 residues: FXYD domain-containing ion transport regulator 11 (69 aa).

The signal sequence occupies residues 1 to 22 (MSQLTELVLLTVFLALFSRAEA). The Extracellular segment spans residues 23-33 (NPFVYNYEALR). Residues 34–54 (IGGLVFTCVLVAGAVTALCWG) form a helical membrane-spanning segment. Topologically, residues 55–69 (QCKPKRKHDDDASKI) are cytoplasmic.

It belongs to the FXYD family. In terms of tissue distribution, detected in adult gill and in larval skin at 2 days post-fertilization (at protein level). In adult gill, strong expression is found in the basal regions of the secondary lamellae.

The protein localises to the cell membrane. Its function is as follows. May modulate the activity of a sodium/potassium-transporting ATPase. The chain is FXYD domain-containing ion transport regulator 11 from Danio rerio (Zebrafish).